The primary structure comprises 403 residues: Forkhead box protein Q1 (403 aa).

Disordered regions lie at residues 1 to 75 and 94 to 116; these read MKLE…PGAE and GAAGPGAGGAGSGEGARSKPYTR. Residues 32–48 show a composition bias toward low complexity; that stretch reads LSAAGDDSLGSDGDCAA. Gly residues predominate over residues 96–107; that stretch reads AGPGAGGAGSGE. The fork-head DNA-binding region spans 119 to 214; the sequence is KPPYSYIALI…ADGVFRRRRK (96 aa). The tract at residues 216–266 is disordered; that stretch reads LSHRAPVPAPGLRPEEAPGLPAAPPPAPAAPASPRMRSPARQEERASPAGK. Positions 236 to 246 are enriched in pro residues; that stretch reads PAAPPPAPAAP.

Expressed predominantly in the stomach, trachea, bladder and salivary gland.

The protein localises to the nucleus. Its function is as follows. Plays a role in hair follicle differentiation. This is Forkhead box protein Q1 (FOXQ1) from Homo sapiens (Human).